Here is an 858-residue protein sequence, read N- to C-terminus: Chitin synthase 2 (858 aa).

The segment covering M1–Q12 has biased composition (basic and acidic residues). Residues M1–R116 are disordered. The segment covering L15–P24 has biased composition (polar residues). Composition is skewed to pro residues over residues A52–P68 and P76–P89. The next 7 helical transmembrane spans lie at R500–R517, T540–L560, L586–L606, M621–V641, N665–L685, V799–I819, and A825–T845.

It belongs to the chitin synthase family.

It localises to the cell membrane. The enzyme catalyses [(1-&gt;4)-N-acetyl-beta-D-glucosaminyl](n) + UDP-N-acetyl-alpha-D-glucosamine = [(1-&gt;4)-N-acetyl-beta-D-glucosaminyl](n+1) + UDP + H(+). Polymerizes chitin, a structural polymer of the cell wall and septum, by transferring the sugar moiety of UDP-GlcNAc to the non-reducing end of the growing chitin polymer. This is Chitin synthase 2 (CHS2) from Rhizopus oligosporus (Rhizopus microsporus var. oligosporus).